The primary structure comprises 83 residues: Gas vesicle protein G2 (83 aa).

The protein belongs to the gas vesicle GvpG family. In terms of assembly, gvpF to GvpM interact with each other in vitro, and may form multi-subunit complex(es).

It is found in the gas vesicle. In terms of biological role, proteins GvpF to GvpM might be involved in nucleating gas vesicle formation. A minor component of the gas vesicle. Gas vesicles are hollow, gas filled proteinaceous nanostructures found in several microbial planktonic microorganisms. They allow positioning of halobacteria at the optimal depth for growth in the poorly aerated, shallow brine pools of their habitat. Its function is as follows. Expression of 2 c-vac DNA fragments containing 2 divergently transcribed regions (gvpE-gvpF-gvpG-gvpH-gvpI-gvpJ-gvpK-gvpL-gvpM and gvpA-gvpC-gvpN-gvpO) allows H.volcanii to produce gas vesicles. This is Gas vesicle protein G2 from Halobacterium salinarum (strain ATCC 700922 / JCM 11081 / NRC-1) (Halobacterium halobium).